The sequence spans 397 residues: Cathepsin E (397 aa).

The signal sequence occupies residues 1 to 16 (MKQFLVVLLILSFVHG). A propeptide spans 17-49 (IIRVPLKRQKSMRKILKEKGKLSHLWTKQGNEF) (activation peptide). The region spanning 74–385 (YFGQISIGTP…DRGNNRVGFA (312 aa)) is the Peptidase A1 domain. D92 is an active-site residue. C105 and C110 are oxidised to a cystine. A glycan (N-linked (GlcNAc...) asparagine) is linked at N139. Residues C268 and C272 are joined by a disulfide bond. Residue D277 is part of the active site. Cysteines 310 and 344 form a disulfide.

It belongs to the peptidase A1 family. Homodimer; disulfide-linked. Post-translationally, glycosylated. Contains high mannose-type oligosaccharide. In terms of tissue distribution, found in the larval foregut and adult stomach.

It localises to the endosome. It carries out the reaction Similar to cathepsin D, but slightly broader specificity.. Functionally, may have a role in immune function. Probably involved in the processing of antigenic peptides during MHC class II-mediated antigen presentation. This chain is Cathepsin E (CTSE), found in Aquarana catesbeiana (American bullfrog).